The primary structure comprises 261 residues: Taurine import ATP-binding protein TauB (261 aa).

Residues 4–233 form the ABC transporter domain; that stretch reads LQLEGIGAHY…RYSAGESARA (230 aa). 38–45 is an ATP binding site; the sequence is GPSGSGKT.

This sequence belongs to the ABC transporter superfamily. Taurine importer (TC 3.A.1.17.1) family. In terms of assembly, the complex is composed of two ATP-binding proteins (TauB), two transmembrane proteins (TauC) and a solute-binding protein (TauA).

The protein localises to the cell inner membrane. The catalysed reaction is taurine(out) + ATP + H2O = taurine(in) + ADP + phosphate + H(+). Functionally, part of the ABC transporter complex TauABC involved in taurine import. Responsible for energy coupling to the transport system. This chain is Taurine import ATP-binding protein TauB, found in Pseudomonas syringae pv. tomato (strain ATCC BAA-871 / DC3000).